We begin with the raw amino-acid sequence, 199 residues long: Imidazoleglycerol-phosphate dehydratase (199 aa).

Belongs to the imidazoleglycerol-phosphate dehydratase family.

Its subcellular location is the cytoplasm. It carries out the reaction D-erythro-1-(imidazol-4-yl)glycerol 3-phosphate = 3-(imidazol-4-yl)-2-oxopropyl phosphate + H2O. It functions in the pathway amino-acid biosynthesis; L-histidine biosynthesis; L-histidine from 5-phospho-alpha-D-ribose 1-diphosphate: step 6/9. This is Imidazoleglycerol-phosphate dehydratase from Lactococcus lactis subsp. cremoris (strain MG1363).